Consider the following 357-residue polypeptide: Phosphoribosylformylglycinamidine cyclo-ligase (357 aa).

It belongs to the AIR synthase family.

It is found in the cytoplasm. The catalysed reaction is 2-formamido-N(1)-(5-O-phospho-beta-D-ribosyl)acetamidine + ATP = 5-amino-1-(5-phospho-beta-D-ribosyl)imidazole + ADP + phosphate + H(+). It functions in the pathway purine metabolism; IMP biosynthesis via de novo pathway; 5-amino-1-(5-phospho-D-ribosyl)imidazole from N(2)-formyl-N(1)-(5-phospho-D-ribosyl)glycinamide: step 2/2. The protein is Phosphoribosylformylglycinamidine cyclo-ligase of Rhizobium rhizogenes (strain K84 / ATCC BAA-868) (Agrobacterium radiobacter).